The primary structure comprises 61 residues: Temporin-SN3 (61 aa).

Positions methionine 1 to cysteine 22 are cleaved as a signal peptide. Positions glutamate 23 to lysine 44 are cleaved as a propeptide — removed in mature form. Lysine 61 carries the post-translational modification Lysine amide.

The protein belongs to the frog skin active peptide (FSAP) family. Temporin subfamily. As to expression, expressed by the skin glands.

Its subcellular location is the secreted. In terms of biological role, antimicrobial peptide. Active against some Gram-positive and Gram-negative bacterial strains. Active against fungus C.glabrata 090902 but not against C.albicans ATCC 12231. Shows weak hemolytic activity against human erythrocytes. This Sylvirana spinulosa (Fine-spined frog) protein is Temporin-SN3.